Here is a 122-residue protein sequence, read N- to C-terminus: Large ribosomal subunit protein uL14 (122 aa).

It belongs to the universal ribosomal protein uL14 family. As to quaternary structure, part of the 50S ribosomal subunit. Forms a cluster with proteins L3 and L19. In the 70S ribosome, L14 and L19 interact and together make contacts with the 16S rRNA in bridges B5 and B8.

In terms of biological role, binds to 23S rRNA. Forms part of two intersubunit bridges in the 70S ribosome. The polypeptide is Large ribosomal subunit protein uL14 (Pelagibacter ubique (strain HTCC1062)).